The following is a 1446-amino-acid chain: E3 ubiquitin-protein ligase listerin (1446 aa).

11 HEAT repeats span residues 71 to 108 (QTREKGLKELMELINTENSSIESSYEHFCGLVAQLTTD), 115 to 153 (MLTMKVISQFLTKLKKSASKGLKKIIPFVLFAKSDVTNG), 324 to 361 (SLQKGIYPRLLNLIRKKGNHWRVLKHYLLPAVSVLLQK), 363 to 399 (ENPALITSIITSFTDNLPWQAEASMNAIHCWFCTFSD), 413 to 450 (EILKDLSPLIVEMSNQSMHFNTAEATECISGLIHWIIE), 630 to 669 (AENVDFLISLLQSLDSKEDPEERKNLVLKLLSALFDAEDE), 684 to 721 (GDFEQFFEKLFANMEEEDAERVLEIAARFDKLVGFCDA), 1046 to 1083 (LRALFVISEFPTSFSNDDDVANQEFIPELSVFKYPAFQ), 1107 to 1144 (SVARLLMPIMFKLENAAALKSNEDSELPVSTNRRKLSL), 1165 to 1202 (LLDLTLLPLENTKDSGFSQEHRVAYCDVIDPFFKNALN), and 1251 to 1289 (FKSMTLLPAAIRLFYKGMPNCFMPMFQETVTKYASRLLI). An RING-type zinc finger spans residues 1395 to 1442 (CTICMMTVHQQTHQLPKIKCKQCKNKFHSNCLYKWFESSNQSTCPLCR).

Belongs to the LTN1 family. As to quaternary structure, component of the ribosome quality control complex (RQC), composed of at least the E3 ubiquitin ligase ltn1 and nemf. The complex probably also contains tcf25 as well as vcp/p97 and its ubiquitin-binding cofactors. RQC forms a stable complex with 60S ribosomal subunits.

The protein resides in the cytoplasm. It is found in the cytosol. It carries out the reaction S-ubiquitinyl-[E2 ubiquitin-conjugating enzyme]-L-cysteine + [acceptor protein]-L-lysine = [E2 ubiquitin-conjugating enzyme]-L-cysteine + N(6)-ubiquitinyl-[acceptor protein]-L-lysine.. It participates in protein modification; protein ubiquitination. Functionally, E3 ubiquitin-protein ligase. Component of the ribosome quality control complex (RQC), a ribosome-associated complex that mediates ubiquitination and extraction of incompletely synthesized nascent chains for proteasomal degradation. Ubiquitination leads to vcp/p97 recruitment for extraction and degradation of the incomplete translation product. This Caenorhabditis elegans protein is E3 ubiquitin-protein ligase listerin.